The chain runs to 462 residues: Proteases secretion protein PrtF (462 aa).

An N-terminal signal peptide occupies residues 1–23 (MRRKAVLLTVVLSLSGGSAQAMG).

This sequence belongs to the outer membrane factor (OMF) (TC 1.B.17) family.

The protein localises to the cell outer membrane. In terms of biological role, involved in the secretion of proteases A, B, C and G. This is Proteases secretion protein PrtF (prtF) from Dickeya chrysanthemi (Pectobacterium chrysanthemi).